Here is a 482-residue protein sequence, read N- to C-terminus: UDP-N-acetylmuramoyl-L-alanyl-D-glutamate--2,6-diaminopimelate ligase 1 (482 aa).

S30 lines the UDP-N-acetyl-alpha-D-muramoyl-L-alanyl-D-glutamate pocket. Residue G110–T116 coordinates ATP. Residues T152–T153, S179, and R187 each bind UDP-N-acetyl-alpha-D-muramoyl-L-alanyl-D-glutamate. The residue at position 219 (K219) is an N6-carboxylysine. Residues R378, D402–R405, G452, and E456 contribute to the meso-2,6-diaminopimelate site. Residues D402–R405 carry the Meso-diaminopimelate recognition motif motif.

It belongs to the MurCDEF family. MurE subfamily. The cofactor is Mg(2+). Carboxylation is probably crucial for Mg(2+) binding and, consequently, for the gamma-phosphate positioning of ATP.

The protein resides in the cytoplasm. It carries out the reaction UDP-N-acetyl-alpha-D-muramoyl-L-alanyl-D-glutamate + meso-2,6-diaminopimelate + ATP = UDP-N-acetyl-alpha-D-muramoyl-L-alanyl-gamma-D-glutamyl-meso-2,6-diaminopimelate + ADP + phosphate + H(+). It participates in cell wall biogenesis; peptidoglycan biosynthesis. In terms of biological role, catalyzes the addition of meso-diaminopimelic acid to the nucleotide precursor UDP-N-acetylmuramoyl-L-alanyl-D-glutamate (UMAG) in the biosynthesis of bacterial cell-wall peptidoglycan. This Clostridium acetobutylicum (strain ATCC 824 / DSM 792 / JCM 1419 / IAM 19013 / LMG 5710 / NBRC 13948 / NRRL B-527 / VKM B-1787 / 2291 / W) protein is UDP-N-acetylmuramoyl-L-alanyl-D-glutamate--2,6-diaminopimelate ligase 1.